A 123-amino-acid polypeptide reads, in one-letter code: MRHKLAGRKFNRTSAHRQAMFKNMAVSLIEHELIKTTLPKAKDLRRVIEPMITHAKNNDTVAARRLAFARLRDRAAVQKLFAELAPRYQERAGGYVRILKCDFRAGDQAPMAYVELVDRPVAE.

The protein belongs to the bacterial ribosomal protein bL17 family. Part of the 50S ribosomal subunit. Contacts protein L32.

This chain is Large ribosomal subunit protein bL17, found in Dichelobacter nodosus (strain VCS1703A).